The sequence spans 343 residues: General stress protein 30 (343 aa).

Belongs to the polysaccharide pyruvyl transferase family.

The polypeptide is General stress protein 30 (yxaB) (Bacillus subtilis (strain 168)).